A 154-amino-acid polypeptide reads, in one-letter code: MRYHQYYPVDIVNGPGTRCTLFVSGCVHECPGCYNKSTWRLNSGQPFTKEMEDKIIADLNDTRIHRQGISLSGGDPLHPQNVPDILALVQRIHAECPGKDIWVWTGYRLDELNAAQMQVVNLINVLVDGKFVQDLKDPALIWRGSSNQVVHHLR.

[4Fe-4S] cluster-binding residues include Cys26, Cys30, and Cys33. S-adenosyl-L-methionine is bound by residues 32–34 and Gly74; that span reads GCY.

The protein belongs to the organic radical-activating enzymes family. In terms of assembly, forms a tetramer composed of two NrdD and two NrdG subunits. Requires [4Fe-4S] cluster as cofactor.

Its subcellular location is the cytoplasm. The enzyme catalyses glycyl-[protein] + reduced [flavodoxin] + S-adenosyl-L-methionine = glycin-2-yl radical-[protein] + semiquinone [flavodoxin] + 5'-deoxyadenosine + L-methionine + H(+). In terms of biological role, activation of anaerobic ribonucleoside-triphosphate reductase under anaerobic conditions by generation of an organic free radical, using S-adenosylmethionine and reduced flavodoxin as cosubstrates to produce 5'-deoxy-adenosine. The chain is Anaerobic ribonucleoside-triphosphate reductase-activating protein (nrdG) from Salmonella typhi.